Consider the following 193-residue polypeptide: Putative protein-glutamate methylesterase/protein-glutamine glutaminase (193 aa).

One can recognise a CheB-type methylesterase domain in the interval 1–179; that stretch reads MNYEAIVIGV…DYVLSLEKIA (179 aa). Residues Ser-11, His-38, and Asp-131 contribute to the active site.

This sequence belongs to the CheB family.

The protein resides in the cytoplasm. The enzyme catalyses [protein]-L-glutamate 5-O-methyl ester + H2O = L-glutamyl-[protein] + methanol + H(+). It carries out the reaction L-glutaminyl-[protein] + H2O = L-glutamyl-[protein] + NH4(+). In terms of biological role, may be involved in chemotaxis. The chain is Putative protein-glutamate methylesterase/protein-glutamine glutaminase (cheB2) from Leptospira interrogans serogroup Icterohaemorrhagiae serovar copenhageni (strain Fiocruz L1-130).